Consider the following 186-residue polypeptide: Inosine/xanthosine triphosphatase (186 aa).

A Mg(2+)-binding site is contributed by Q75.

Belongs to the YjjX NTPase family. As to quaternary structure, homodimer. Mg(2+) is required as a cofactor. It depends on Mn(2+) as a cofactor.

The catalysed reaction is XTP + H2O = XDP + phosphate + H(+). The enzyme catalyses ITP + H2O = IDP + phosphate + H(+). Phosphatase that hydrolyzes non-canonical purine nucleotides such as XTP and ITP to their respective diphosphate derivatives. Probably excludes non-canonical purines from DNA/RNA precursor pool, thus preventing their incorporation into DNA/RNA and avoiding chromosomal lesions. The protein is Inosine/xanthosine triphosphatase of Shewanella baltica (strain OS195).